Consider the following 87-residue polypeptide: Small ribosomal subunit protein uS17 (87 aa).

The protein belongs to the universal ribosomal protein uS17 family. Part of the 30S ribosomal subunit.

One of the primary rRNA binding proteins, it binds specifically to the 5'-end of 16S ribosomal RNA. This chain is Small ribosomal subunit protein uS17, found in Oceanobacillus iheyensis (strain DSM 14371 / CIP 107618 / JCM 11309 / KCTC 3954 / HTE831).